The primary structure comprises 329 residues: Serpentine receptor class alpha-8 (329 aa).

A run of 6 helical transmembrane segments spans residues 26 to 46 (VDLITSFFTYMLSIIAIKMVL), 60 to 80 (FLNIFYANLYQIVYSIDVVVI), 141 to 161 (IFVGSFIAIVVMISTTSTGKL), 187 to 207 (TIHFYISTVVSLFNLAASVAL), 231 to 251 (VIESTETICFLNFTQFVFMFI), and 273 to 293 (FWVVWCYTVPFIALTFPLLLI).

Belongs to the nematode receptor-like protein sra family.

The protein localises to the membrane. This chain is Serpentine receptor class alpha-8 (sra-8), found in Caenorhabditis elegans.